The sequence spans 300 residues: Protoheme IX farnesyltransferase (300 aa).

9 helical membrane-spanning segments follow: residues 24–44 (VTQL…PGMV), 48–68 (VLLG…AINC), 94–114 (LQIL…LYTF), 118–138 (LTIW…TLLL), 146–166 (IVIG…AVTG), 172–192 (AWIL…VLAL), 217–237 (LHIL…FISG), 239–259 (SGAV…AYAW), and 278–298 (IVYL…RPVI).

The protein belongs to the UbiA prenyltransferase family. Protoheme IX farnesyltransferase subfamily.

It is found in the cell inner membrane. The catalysed reaction is heme b + (2E,6E)-farnesyl diphosphate + H2O = Fe(II)-heme o + diphosphate. It functions in the pathway porphyrin-containing compound metabolism; heme O biosynthesis; heme O from protoheme: step 1/1. Its function is as follows. Converts heme B (protoheme IX) to heme O by substitution of the vinyl group on carbon 2 of heme B porphyrin ring with a hydroxyethyl farnesyl side group. The chain is Protoheme IX farnesyltransferase from Burkholderia mallei (strain NCTC 10247).